Here is a 305-residue protein sequence, read N- to C-terminus: Ribosomal RNA small subunit methyltransferase H (305 aa).

Residues 47–49, Asp66, Phe93, Asp108, and Gln115 contribute to the S-adenosyl-L-methionine site; that span reads GGH. The interval 279-305 is disordered; the sequence is ADSNEKLNNPRSRSAKLRLAKKRNPNE. Basic residues predominate over residues 291 to 305; it reads RSAKLRLAKKRNPNE.

The protein belongs to the methyltransferase superfamily. RsmH family.

It is found in the cytoplasm. It catalyses the reaction cytidine(1402) in 16S rRNA + S-adenosyl-L-methionine = N(4)-methylcytidine(1402) in 16S rRNA + S-adenosyl-L-homocysteine + H(+). Specifically methylates the N4 position of cytidine in position 1402 (C1402) of 16S rRNA. The protein is Ribosomal RNA small subunit methyltransferase H of Prochlorococcus marinus (strain SARG / CCMP1375 / SS120).